Here is a 632-residue protein sequence, read N- to C-terminus: tRNA uridine 5-carboxymethylaminomethyl modification enzyme MnmG (632 aa).

Residues 15 to 20, I127, and S182 contribute to the FAD site; that span reads GAGHAG. 276–290 lines the NAD(+) pocket; the sequence is GPRYCPSIEDKIVRF. Q373 provides a ligand contact to FAD.

This sequence belongs to the MnmG family. As to quaternary structure, homodimer. Heterotetramer of two MnmE and two MnmG subunits. It depends on FAD as a cofactor.

It localises to the cytoplasm. Its function is as follows. NAD-binding protein involved in the addition of a carboxymethylaminomethyl (cmnm) group at the wobble position (U34) of certain tRNAs, forming tRNA-cmnm(5)s(2)U34. The sequence is that of tRNA uridine 5-carboxymethylaminomethyl modification enzyme MnmG from Streptococcus pyogenes serotype M2 (strain MGAS10270).